The chain runs to 116 residues: Large ribosomal subunit protein bL20 (116 aa).

The protein belongs to the bacterial ribosomal protein bL20 family.

In terms of biological role, binds directly to 23S ribosomal RNA and is necessary for the in vitro assembly process of the 50S ribosomal subunit. It is not involved in the protein synthesizing functions of that subunit. The chain is Large ribosomal subunit protein bL20 from Hydrogenobaculum sp. (strain Y04AAS1).